The following is a 411-amino-acid chain: Serine/threonine-protein kinase 54 (411 aa).

Phosphoserine; by PHOT1 occurs at positions 43 and 45. The Protein kinase domain maps to 108-385 (LIIKSVIARG…EEVVAMLEAI (278 aa)). Residues 114-122 (IARGTFGTV) and lysine 135 contribute to the ATP site. Aspartate 253 acts as the Proton acceptor in catalysis. Residue threonine 286 is modified to Phosphothreonine.

This sequence belongs to the protein kinase superfamily. Ser/Thr protein kinase family. Binds to CBC2. Associates with PHOT2, BLUS1 and PM H(+)-ATPase (e.g. AHA1). Post-translationally, autophosphorylated. Phosphorylated in guard cells by HT1 in response to low CO(2) concentrations and by PHOT1 after blue light (BL) exposure. As to expression, expressed in guard cells.

It is found in the cytoplasm. The protein localises to the cytosol. The catalysed reaction is L-seryl-[protein] + ATP = O-phospho-L-seryl-[protein] + ADP + H(+). It catalyses the reaction L-threonyl-[protein] + ATP = O-phospho-L-threonyl-[protein] + ADP + H(+). Functionally, serine/threonine protein kinase that phosphorylates proteins on serine and threonine residues. Collectively with CBC2, acts as a negative regulator of stomatal opening, probably via the inhibition of plasma membrane-type ATPases (AHA1 and AHA2) activity in guard cells, but in an abscisic acid (ABA)-independent manner. However, at low concentrations of CO(2), together with CBC2, stimulates stomatal opening via the inhibition of S-type anion channels in response to blue light (BL) and red light (RL), thus being a key component to maximize photosynthesis in the light under low CO(2) conditions. Required for temperature decrease in leaves. Downstream target of HIGH LEAF TEMPERATURE1 (HT1) during low CO(2)-induced stomatal opening. Also functions in the signaling pathways of phototropins. The polypeptide is Serine/threonine-protein kinase 54 (Arabidopsis thaliana (Mouse-ear cress)).